A 270-amino-acid chain; its full sequence is Acyl-[acyl-carrier-protein]--UDP-N-acetylglucosamine O-acyltransferase (270 aa).

This sequence belongs to the transferase hexapeptide repeat family. LpxA subfamily. Homotrimer.

It localises to the cytoplasm. It catalyses the reaction a (3R)-hydroxyacyl-[ACP] + UDP-N-acetyl-alpha-D-glucosamine = a UDP-3-O-[(3R)-3-hydroxyacyl]-N-acetyl-alpha-D-glucosamine + holo-[ACP]. It participates in glycolipid biosynthesis; lipid IV(A) biosynthesis; lipid IV(A) from (3R)-3-hydroxytetradecanoyl-[acyl-carrier-protein] and UDP-N-acetyl-alpha-D-glucosamine: step 1/6. Its function is as follows. Involved in the biosynthesis of lipid A, a phosphorylated glycolipid that anchors the lipopolysaccharide to the outer membrane of the cell. This chain is Acyl-[acyl-carrier-protein]--UDP-N-acetylglucosamine O-acyltransferase, found in Bartonella tribocorum (strain CIP 105476 / IBS 506).